The chain runs to 744 residues: Polyribonucleotide nucleotidyltransferase (744 aa).

The Mg(2+) site is built by aspartate 487 and aspartate 493. The region spanning 554–613 (PSTTTLKVDKDKIRDIIGPGGKVIKEICETSGAKIDISDDGTVSIYASDKDKLKVALDKV) is the KH domain. Residues 623-691 (GEVFNGTVMK…NKGKAKLTIK (69 aa)) enclose the S1 motif domain. Positions 691-744 (KNAEKDKSSANPKPKNSPKEHQEPEKRDNGKKRAWNEDNNAETTEVVTERKYFS) are disordered. Residues 707–718 (SPKEHQEPEKRD) are compositionally biased toward basic and acidic residues. A compositionally biased stretch (polar residues) spans 727–736 (EDNNAETTEV).

This sequence belongs to the polyribonucleotide nucleotidyltransferase family. The cofactor is Mg(2+).

The protein localises to the cytoplasm. The enzyme catalyses RNA(n+1) + phosphate = RNA(n) + a ribonucleoside 5'-diphosphate. In terms of biological role, involved in mRNA degradation. Catalyzes the phosphorolysis of single-stranded polyribonucleotides processively in the 3'- to 5'-direction. This Rickettsia bellii (strain OSU 85-389) protein is Polyribonucleotide nucleotidyltransferase.